The sequence spans 350 residues: Hydroxymethylglutaryl-CoA synthase (350 aa).

Asp30 contacts (3S)-3-hydroxy-3-methylglutaryl-CoA. The active-site Proton donor/acceptor is the Glu82. (3S)-3-hydroxy-3-methylglutaryl-CoA-binding residues include Cys114, Ser155, Thr203, and His236. Residue Cys114 is the Acyl-thioester intermediate of the active site. His236 functions as the Proton donor/acceptor in the catalytic mechanism. Arg241 contributes to the CoA binding site. Residues Arg245, Asn268, and Ser298 each coordinate (3S)-3-hydroxy-3-methylglutaryl-CoA.

This sequence belongs to the thiolase-like superfamily. Archaeal HMG-CoA synthase family. Interacts with acetoacetyl-CoA thiolase that catalyzes the precedent step in the pathway and with a DUF35 protein. The acetoacetyl-CoA thiolase/HMG-CoA synthase complex channels the intermediate via a fused CoA-binding site, which allows for efficient coupling of the endergonic thiolase reaction with the exergonic HMGCS reaction.

The catalysed reaction is acetoacetyl-CoA + acetyl-CoA + H2O = (3S)-3-hydroxy-3-methylglutaryl-CoA + CoA + H(+). It functions in the pathway metabolic intermediate biosynthesis; (R)-mevalonate biosynthesis; (R)-mevalonate from acetyl-CoA: step 2/3. In terms of biological role, catalyzes the condensation of acetyl-CoA with acetoacetyl-CoA to form 3-hydroxy-3-methylglutaryl-CoA (HMG-CoA). Functions in the mevalonate (MVA) pathway leading to isopentenyl diphosphate (IPP), a key precursor for the biosynthesis of isoprenoid compounds that are building blocks of archaeal membrane lipids. In Pyrobaculum calidifontis (strain DSM 21063 / JCM 11548 / VA1), this protein is Hydroxymethylglutaryl-CoA synthase.